The primary structure comprises 501 residues: ADP,ATP carrier protein 3 (501 aa).

12 consecutive transmembrane segments (helical) span residues 23 to 43 (LKLF…FGAL), 59 to 79 (IISL…TVLY), 90 to 110 (YIFY…AYII), 146 to 166 (YALM…LMFW), 183 to 203 (PVLG…LVFF), 227 to 247 (IMLQ…MLLF), 293 to 313 (IALL…PWKA), 326 to 346 (FNFM…FMVI), 361 to 381 (LLTP…IIFI), 383 to 403 (EIGA…VGAI), 446 to 466 (FGKS…PTAT), and 470 to 490 (IIIY…WNVI).

The protein belongs to the ADP/ATP translocase tlc family.

Its subcellular location is the cell membrane. In terms of biological role, provides the rickettsial cell with host ATP in exchange for rickettsial ADP. This is an obligate exchange system. This energy acquiring activity is an important component of rickettsial parasitism. This Rickettsia felis (strain ATCC VR-1525 / URRWXCal2) (Rickettsia azadi) protein is ADP,ATP carrier protein 3 (tlcC).